A 622-amino-acid polypeptide reads, in one-letter code: Vacuolar protein sorting-associated protein 27 (622 aa).

Residues 18–149 form the VHS domain; sequence SESIPNGDLD…KLISRGIKFP (132 aa). Serine 157 is modified (phosphoserine). The FYVE-type; atypical zinc-finger motif lies at 170–230; it reads WIDSDACMIC…VCDSCFEDYD (61 aa). Zn(2+)-binding residues include cysteine 176, cysteine 179, cysteine 192, cysteine 195, cysteine 200, histidine 203, cysteine 222, and cysteine 225. Residues 236 to 260 are disordered; sequence DSKKSKKHRHKRKKDRDYSTPEDEE. A compositionally biased stretch (basic residues) spans 239–249; it reads KSKKHRHKRKK. Residues 258–277 enclose the UIM 1 domain; that stretch reads DEEELIRKAIELSLKESRNS. Lysine 294 participates in a covalent cross-link: Glycyl lysine isopeptide (Lys-Gly) (interchain with G-Cter in ubiquitin). The region spanning 301 to 320 is the UIM 2 domain; that stretch reads EEDPDLKAAIQESLREAEEA. A compositionally biased stretch (basic and acidic residues) spans 317–328; it reads AEEAKLRSERQK. Disordered regions lie at residues 317 to 348 and 462 to 622; these read AEEA…IHSV and AESY…LIEL. Over residues 462-500 the composition is skewed to polar residues; the sequence is AESYQTPPLQQLSSHQYKPQQDVSRQQSVKANSSPTTNI. Serine 495 is modified (phosphoserine). Positions 533 to 548 are enriched in acidic residues; that stretch reads EAEDEGTQAVQDEESS. The residue at position 613 (serine 613) is a Phosphoserine.

Belongs to the VPS27 family. In terms of assembly, component of the ESCRT-0 complex composed of HSE1 and VPS27. Interacts with ENT3 and ENT5, the ESCRT-I subunits VPS23 and VPS28 and with the COPIb subunits SEC27, SEC28 and SEC33. May form a complex composed of VPS27, HSE1 and DOA1. Interacts with DOA1. Interacts with ubiquitin.

The protein resides in the endosome membrane. In terms of biological role, component of the ESCRT-0 complex which is the sorting receptor for ubiquitinated cargo proteins at the multivesicular body (MVB) and recruits ESCRT-I to the MVB outer membrane. Controls exit from the prevacuolar compartment (PVC) in both the forward direction to the vacuole and the return to the Golgi. Allows VPS10 to return to the (trans-Golgi network) TGN from the PVC. Might also function as an alternate adapter in the COPIb clathrin-like coat. In Saccharomyces cerevisiae (strain ATCC 204508 / S288c) (Baker's yeast), this protein is Vacuolar protein sorting-associated protein 27 (VPS27).